Reading from the N-terminus, the 78-residue chain is Conotoxin Cl11.1 (78 aa).

The signal sequence occupies residues 1–19 (MKLALTFLLILMILPLTTG). Positions 20 to 33 (GKKSDNQALKRLGA) are excised as a propeptide. Disulfide bonds link C47/C61, C54/C66, C60/C70, and C65/C77.

It belongs to the conotoxin I1 superfamily. Expressed by the venom duct.

It is found in the secreted. The chain is Conotoxin Cl11.1 from Californiconus californicus (California cone).